Here is a 200-residue protein sequence, read N- to C-terminus: Large ribosomal subunit protein bL25 (200 aa).

Belongs to the bacterial ribosomal protein bL25 family. CTC subfamily. Part of the 50S ribosomal subunit; part of the 5S rRNA/L5/L18/L25 subcomplex. Contacts the 5S rRNA. Binds to the 5S rRNA independently of L5 and L18.

This is one of the proteins that binds to the 5S RNA in the ribosome where it forms part of the central protuberance. In Leifsonia xyli subsp. xyli (strain CTCB07), this protein is Large ribosomal subunit protein bL25.